We begin with the raw amino-acid sequence, 511 residues long: Sodium/proline symporter 2 (511 aa).

The next 13 membrane-spanning stretches (helical) occupy residues 16–36 (WQTYIMIIIYFTILLFIGYYG), 54–74 (IGPYVTALSAGASDMSGWMIM), 85–105 (LSAMWITIGLSLGAYVNYFVV), 139–159 (IISGLIIVVFFTLYTHSGFVS), 175–195 (GLLMVAFIVIFYTFFGGYLAV), 204–224 (VIMLIAMVMVPIVALIDLNGI), 246–266 (VLGIISLFAWGLGYFGQPHII), 286–306 (ISWMVIGLLGAVAVGLTGIAF), 327–347 (ILFHPLVGGFLLAAILAAIMS), 381–401 (FLMVGRLSVLIVAIVAIWIAW), 410–430 (LVGNAWAGFGAAFSPLVIFSL), 438–458 (TGALAGMITGALVVIIWIVWI), and 467–487 (LFGMYEIIPGFLASVITTYFV).

Belongs to the sodium:solute symporter (SSF) (TC 2.A.21) family.

The protein resides in the cell membrane. It carries out the reaction L-proline(in) + Na(+)(in) = L-proline(out) + Na(+)(out). Its function is as follows. Catalyzes the sodium-dependent uptake of extracellular L-proline. The protein is Sodium/proline symporter 2 (putP2) of Staphylococcus saprophyticus subsp. saprophyticus (strain ATCC 15305 / DSM 20229 / NCIMB 8711 / NCTC 7292 / S-41).